A 992-amino-acid chain; its full sequence is Tubulin glycylase 3A (992 aa).

Disordered regions lie at residues 1–54 and 68–113; these read MQTR…NRVV and QSDS…LGAP. Residues 7–26 are compositionally biased toward basic and acidic residues; sequence SEPHRSRDQVTDGDRNRDQP. A compositionally biased stretch (pro residues) spans 39–49; sequence VTPPAAPPPTP. One can recognise a TTL domain in the interval 295–645; that stretch reads FKLTACVAFL…RRTDPKAELG (351 aa). ATP-binding positions include 457-460, Lys-470, and Asp-472; that span reads QKYI. 2 disordered regions span residues 746 to 766 and 791 to 828; these read SLCS…TATP and KRNT…PVES. Positions 794–807 are enriched in polar residues; sequence TGGSLSGEQVQSTA.

It localises to the cytoplasm. Its subcellular location is the cytoskeleton. Its function is as follows. Polylycylase which modifies alpha- and beta-tubulin, generating side chains of glycine on the gamma-carboxyl groups of specific glutamate residues within the C-terminal tail of alpha- and beta-tubulin. Involved both in the side-chain initiation and elongation steps of the polyglycylation reaction by adding a single glycine chain to generate monoglycine side chains and by elongating monoglycine side chains to polyglycine side chains. The sequence is that of Tubulin glycylase 3A (TTLL3A) from Drosophila melanogaster (Fruit fly).